The primary structure comprises 572 residues: Glutathione hydrolase 1 (572 aa).

A signal peptide spans 1–22; it reads MSLVRTVTIVLFIIAFLQNAAA. Residue R99 coordinates L-glutamate. Residues N171 and N222 are each glycosylated (N-linked (GlcNAc...) asparagine). T368 acts as the Nucleophile in catalysis. L-glutamate contacts are provided by residues T386, N388, E407, D410, 440–441, and 461–462; these read SS and GG. Residue N505 is glycosylated (N-linked (GlcNAc...) asparagine). The tract at residues 552-572 is disordered; it reads GGRSELVAVSDPRKGGFPSGY.

It belongs to the gamma-glutamyltransferase family. Expressed in embryo, roots and leaves. In mature plants, expression is restricted to vascular tissues of roots, leaves, flowers and siliques.

It is found in the secreted. It localises to the extracellular space. The protein resides in the apoplast. The enzyme catalyses an N-terminal (5-L-glutamyl)-[peptide] + an alpha-amino acid = 5-L-glutamyl amino acid + an N-terminal L-alpha-aminoacyl-[peptide]. It carries out the reaction glutathione + H2O = L-cysteinylglycine + L-glutamate. The catalysed reaction is an S-substituted glutathione + H2O = an S-substituted L-cysteinylglycine + L-glutamate. Its pathway is sulfur metabolism; glutathione metabolism. Functionally, may play a role in preventing oxidative stress by metabolizing extracellular oxidized glutathione (GSSG). The polypeptide is Glutathione hydrolase 1 (GGT1) (Arabidopsis thaliana (Mouse-ear cress)).